Consider the following 131-residue polypeptide: Large ribosomal subunit protein bL17 (131 aa).

The protein belongs to the bacterial ribosomal protein bL17 family. In terms of assembly, part of the 50S ribosomal subunit. Contacts protein L32.

The polypeptide is Large ribosomal subunit protein bL17 (Cupriavidus pinatubonensis (strain JMP 134 / LMG 1197) (Cupriavidus necator (strain JMP 134))).